The sequence spans 347 residues: Ribosomal RNA small subunit methyltransferase C (347 aa).

The protein belongs to the methyltransferase superfamily. RsmC family. Monomer.

Its subcellular location is the cytoplasm. It catalyses the reaction guanosine(1207) in 16S rRNA + S-adenosyl-L-methionine = N(2)-methylguanosine(1207) in 16S rRNA + S-adenosyl-L-homocysteine + H(+). Functionally, specifically methylates the guanine in position 1207 of 16S rRNA in the 30S particle. In Yersinia enterocolitica serotype O:8 / biotype 1B (strain NCTC 13174 / 8081), this protein is Ribosomal RNA small subunit methyltransferase C.